The following is a 346-amino-acid chain: Prepilin peptidase EppA (346 aa).

10 helical membrane-spanning segments follow: residues 1-21, 31-51, 56-76, 77-97, 101-121, 128-148, 149-169, 182-202, 206-226, and 321-341; these read MFGF…LILT, IIPH…GYYF, AITS…GMGG, GDVK…IYFV, ISIL…TKIL, IIPS…ITEI, YSIG…IFIS, LGYI…AYFV, VLIS…VIYA, and PFVP…MGVI.

It belongs to the peptidase A24 family.

The protein localises to the cell membrane. Its function is as follows. Peptidase that processes the N-terminus of prepilins. Specifically cleaves proteins with a class III (type IV pilin-like) signal sequence, such as the major structural pilin EpdE and the minor pilins EpdA, EpdC and EpdD. Is not able to cleave the preflagellin subunit FlaB2. The chain is Prepilin peptidase EppA from Methanococcus maripaludis (strain DSM 14266 / JCM 13030 / NBRC 101832 / S2 / LL).